The sequence spans 396 residues: Protein NDRG1-A (396 aa).

The tract at residues 326–396 is disordered; sequence RSRTGSAASS…NSPKSMEVSC (71 aa). The span at 327-340 shows a compositional bias: low complexity; sequence SRTGSAASSSSQDG. A run of 4 repeats spans residues 340–349, 350–359, 360–369, and 370–379. Residues 340 to 379 are 4 X 10 AA tandem repeats of G-[NS]-R-S-R-[AS]-H-T-[DGN]-[DET]; sequence GNRSRSHTNEGSRSRSHTGDGNRSRAHTGDGNRSRSHTDT. Residues 346 to 377 show a composition bias toward basic and acidic residues; the sequence is HTNEGSRSRSHTGDGNRSRAHTGDGNRSRSHT. Over residues 378–390 the composition is skewed to polar residues; sequence DTNNINSDQNSPK.

It belongs to the NDRG family.

Its function is as follows. May be involved in pronephros development, after specification of the pronephros. The chain is Protein NDRG1-A (ndrg1-a) from Xenopus laevis (African clawed frog).